Here is a 504-residue protein sequence, read N- to C-terminus: Anaerobic nitric oxide reductase transcription regulator NorR (504 aa).

The residue at position 57 (Asp57) is a 4-aspartylphosphate. Positions 187 to 416 (MIGLSPGMTQ…LEHAIHRAVV (230 aa)) constitute a Sigma-54 factor interaction domain. ATP-binding positions include 215 to 222 (GETGTGKE) and 278 to 287 (ADNGTLFLDE). The segment at residues 479-498 (WAACARMLETDVANLHRLAK) is a DNA-binding region (H-T-H motif).

The protein operates within nitrogen metabolism; nitric oxide reduction. Required for the expression of anaerobic nitric oxide (NO) reductase, acts as a transcriptional activator for at least the norVW operon. Activation also requires sigma-54. The chain is Anaerobic nitric oxide reductase transcription regulator NorR from Escherichia coli O81 (strain ED1a).